We begin with the raw amino-acid sequence, 129 residues long: Glycine cleavage system H protein (129 aa).

The Lipoyl-binding domain occupies 24 to 106 (IAVIGITAYA…YGDGWLIKVR (83 aa)). Lysine 65 is modified (N6-lipoyllysine).

This sequence belongs to the GcvH family. As to quaternary structure, the glycine cleavage system is composed of four proteins: P, T, L and H. It depends on (R)-lipoate as a cofactor.

In terms of biological role, the glycine cleavage system catalyzes the degradation of glycine. The H protein shuttles the methylamine group of glycine from the P protein to the T protein. In Synechococcus sp. (strain JA-2-3B'a(2-13)) (Cyanobacteria bacterium Yellowstone B-Prime), this protein is Glycine cleavage system H protein.